The following is an 83-amino-acid chain: UPF0297 protein CLK_1948 (83 aa).

This sequence belongs to the UPF0297 family.

The chain is UPF0297 protein CLK_1948 from Clostridium botulinum (strain Loch Maree / Type A3).